A 164-amino-acid chain; its full sequence is Crossover junction endodeoxyribonuclease RuvC (164 aa).

Active-site residues include Asp7, Glu67, and Asp140. Asp7, Glu67, and Asp140 together coordinate Mg(2+).

Belongs to the RuvC family. Homodimer which binds Holliday junction (HJ) DNA. The HJ becomes 2-fold symmetrical on binding to RuvC with unstacked arms; it has a different conformation from HJ DNA in complex with RuvA. In the full resolvosome a probable DNA-RuvA(4)-RuvB(12)-RuvC(2) complex forms which resolves the HJ. Requires Mg(2+) as cofactor.

The protein localises to the cytoplasm. It carries out the reaction Endonucleolytic cleavage at a junction such as a reciprocal single-stranded crossover between two homologous DNA duplexes (Holliday junction).. Functionally, the RuvA-RuvB-RuvC complex processes Holliday junction (HJ) DNA during genetic recombination and DNA repair. Endonuclease that resolves HJ intermediates. Cleaves cruciform DNA by making single-stranded nicks across the HJ at symmetrical positions within the homologous arms, yielding a 5'-phosphate and a 3'-hydroxyl group; requires a central core of homology in the junction. The consensus cleavage sequence is 5'-(A/T)TT(C/G)-3'. Cleavage occurs on the 3'-side of the TT dinucleotide at the point of strand exchange. HJ branch migration catalyzed by RuvA-RuvB allows RuvC to scan DNA until it finds its consensus sequence, where it cleaves and resolves the cruciform DNA. This Alkaliphilus metalliredigens (strain QYMF) protein is Crossover junction endodeoxyribonuclease RuvC.